A 375-amino-acid chain; its full sequence is Platelet-derived growth factor receptor-like protein (375 aa).

The N-terminal stretch at 1–17 (MKVWLLLGLLLLHEALG) is a signal peptide. Residues 19 to 63 (VAGQHPPKNKRPKEQGENRIKPTNKKAKPKIPKIKDRDTADSAPK) form a disordered region. A compositionally biased stretch (basic residues) spans 40 to 50 (PTNKKAKPKIP). In terms of domain architecture, Ig-like C2-type 1 spans 62-159 (PKSQSIMMQA…GYICRRDEAR (98 aa)). Residues Cys96 and Cys143 are joined by a disulfide bond. An N-linked (GlcNAc...) asparagine glycan is attached at Asn219. Residues 272-375 (PSTTILASSN…TTVATTVEFS (104 aa)) form the Ig-like C2-type 2 domain. Cys293 and Cys357 are joined by a disulfide.

As to quaternary structure, forms a complex composed of PDGFRL, TNK2 and GRB2.

It localises to the secreted. This chain is Platelet-derived growth factor receptor-like protein (Pdgfrl), found in Rattus norvegicus (Rat).